The following is a 540-amino-acid chain: Eukaryotic translation initiation factor 3 subunit L (540 aa).

A PCI domain is found at 307-515 (TFSDILLYIQ…IHIADTKVSH (209 aa)).

The protein belongs to the eIF-3 subunit L family. As to quaternary structure, component of the eukaryotic translation initiation factor 3 (eIF-3) complex. The eIF-3 complex interacts with pix.

Its subcellular location is the cytoplasm. In terms of biological role, component of the eukaryotic translation initiation factor 3 (eIF-3) complex, which is involved in protein synthesis of a specialized repertoire of mRNAs and, together with other initiation factors, stimulates binding of mRNA and methionyl-tRNAi to the 40S ribosome. The eIF-3 complex specifically targets and initiates translation of a subset of mRNAs involved in cell proliferation. This Drosophila grimshawi (Hawaiian fruit fly) protein is Eukaryotic translation initiation factor 3 subunit L.